Here is a 179-residue protein sequence, read N- to C-terminus: Large ribosomal subunit protein uL6 (179 aa).

The protein belongs to the universal ribosomal protein uL6 family. As to quaternary structure, part of the 50S ribosomal subunit.

Its function is as follows. This protein binds to the 23S rRNA, and is important in its secondary structure. It is located near the subunit interface in the base of the L7/L12 stalk, and near the tRNA binding site of the peptidyltransferase center. The polypeptide is Large ribosomal subunit protein uL6 (Finegoldia magna (strain ATCC 29328 / DSM 20472 / WAL 2508) (Peptostreptococcus magnus)).